A 76-amino-acid chain; its full sequence is NADH dehydrogenase [ubiquinone] 1 subunit C1, mitochondrial (76 aa).

Residues 1 to 27 constitute a mitochondrion transit peptide; it reads MAPSALLRPLSRLLAPARLPSGPSVRS. A helical transmembrane segment spans residues 41–59; the sequence is WLKVGFTLGTTVFLWIYLI.

Belongs to the complex I NDUFC1 subunit family. In terms of assembly, complex I is composed of 45 different subunits.

The protein localises to the mitochondrion inner membrane. Its function is as follows. Accessory subunit of the mitochondrial membrane respiratory chain NADH dehydrogenase (Complex I), that is believed not to be involved in catalysis. Complex I functions in the transfer of electrons from NADH to the respiratory chain. The immediate electron acceptor for the enzyme is believed to be ubiquinone. This chain is NADH dehydrogenase [ubiquinone] 1 subunit C1, mitochondrial (NDUFC1), found in Homo sapiens (Human).